Consider the following 936-residue polypeptide: Bifunctional uridylyltransferase/uridylyl-removing enzyme (936 aa).

The tract at residues 1-372 (MTIPRIRQPR…SIATLLMRKR (372 aa)) is uridylyltransferase. Residues 373-727 (NLGDFVLDGG…VLPDPERAVS (355 aa)) are uridylyl-removing. The HD domain maps to 488-610 (TDEHTIRAIG…VQSVERLHLL (123 aa)). ACT domains lie at 728 to 809 (EVLV…KALR) and 840 to 915 (VIEI…TVPR). The segment covering 915-930 (RKVEEGAEQGAEKADA) has biased composition (basic and acidic residues). A disordered region spans residues 915–936 (RKVEEGAEQGAEKADAGEIVAA).

The protein belongs to the GlnD family. The cofactor is Mg(2+).

It catalyses the reaction [protein-PII]-L-tyrosine + UTP = [protein-PII]-uridylyl-L-tyrosine + diphosphate. It carries out the reaction [protein-PII]-uridylyl-L-tyrosine + H2O = [protein-PII]-L-tyrosine + UMP + H(+). Its activity is regulated as follows. Uridylyltransferase (UTase) activity is inhibited by glutamine, while glutamine activates uridylyl-removing (UR) activity. Modifies, by uridylylation and deuridylylation, the PII regulatory proteins (GlnB and homologs), in response to the nitrogen status of the cell that GlnD senses through the glutamine level. Under low glutamine levels, catalyzes the conversion of the PII proteins and UTP to PII-UMP and PPi, while under higher glutamine levels, GlnD hydrolyzes PII-UMP to PII and UMP (deuridylylation). Thus, controls uridylylation state and activity of the PII proteins, and plays an important role in the regulation of nitrogen fixation and metabolism. This Rhodospirillum rubrum (strain ATCC 11170 / ATH 1.1.1 / DSM 467 / LMG 4362 / NCIMB 8255 / S1) protein is Bifunctional uridylyltransferase/uridylyl-removing enzyme.